A 448-amino-acid chain; its full sequence is MPATAEAADAATQATDAFSTKLEENKLPEGQERGPEEEEDDDDDETPAPGDAEKKKKKKKKSGAKKKKSKTAKAVMEQTEPPSIGLTKMFPNGVFPVGEVQQYDETKFDESRKRVTGEELRERERLIQEKDGFNYNFIRRAAEVHRQVRQYAQRTIKPGMSMTEIANMIEDGTRALVEVNGFESGIGFPTGLSLNEVAAHYTPNAGDKRILQSGDVLKVDFGVQVKGRIVDSAFTMNFEPTYDPLLAAVRAATNTGVKEAGIDARLGEVGAAIQEVMESHEFEAEGKTHQVKCIRNLQGHDIAPYRIHGGKSVPIVAVPNLDVKMEEGETFAIETFGSTGRGYVVDSGECSHYARQANPPHVSLRINSARQLLYTINKNFGSLPFCRRYLDRLGEQNYLLGLRHLVSQGVVQDYPPLADVPGCMTAQFEHTILLRPTCKEVVSRGDDY.

Residues 1 to 17 (MPATAEAADAATQATDA) are compositionally biased toward low complexity. Residues 1-87 (MPATAEAADA…QTEPPSIGLT (87 aa)) form a disordered region. Residues 21–34 (KLEENKLPEGQERG) show a composition bias toward basic and acidic residues. The span at 35–46 (PEEEEDDDDDET) shows a compositional bias: acidic residues. Residues 55–71 (KKKKKKKSGAKKKKSKT) are compositionally biased toward basic residues. Substrate is bound at residue histidine 200. Residues aspartate 220, aspartate 231, and histidine 300 each coordinate a divalent metal cation. Histidine 308 lines the substrate pocket. Glutamate 334 and glutamate 429 together coordinate a divalent metal cation.

It belongs to the peptidase M24A family. Methionine aminopeptidase eukaryotic type 2 subfamily. Co(2+) is required as a cofactor. Requires Zn(2+) as cofactor. Mn(2+) serves as cofactor. It depends on Fe(2+) as a cofactor.

It localises to the cytoplasm. It catalyses the reaction Release of N-terminal amino acids, preferentially methionine, from peptides and arylamides.. In terms of biological role, cotranslationally removes the N-terminal methionine from nascent proteins. The N-terminal methionine is often cleaved when the second residue in the primary sequence is small and uncharged (Met-Ala-, Cys, Gly, Pro, Ser, Thr, or Val). The polypeptide is Methionine aminopeptidase 2 (Malassezia globosa (strain ATCC MYA-4612 / CBS 7966) (Dandruff-associated fungus)).